We begin with the raw amino-acid sequence, 229 residues long: MLSGLIQRFEEEKMKHNQDRVEEPSQVRVDDTISQPPRYAPSAPMPSSMPTVALEILDKAMSNTTGATQTQKAEKAAFASYAGVARDDVRLRQIKRHVNEQILPKLKSDLSGLKKKRAIIHTTLLVAAVVALLTSVCTLSSDMSVAFKINGTKTEVPSWFKSLNPMLGVVNLGATFLMMVCAKSERALNQQIDMIKKEVMKKQSYNDAVRMSFTEFSSIPLDGLEMPLT.

A compositionally biased stretch (basic and acidic residues) spans 13–31 (KMKHNQDRVEEPSQVRVDD). The disordered stretch occupies residues 13-46 (KMKHNQDRVEEPSQVRVDDTISQPPRYAPSAPMP). Residues 36–46 (PPRYAPSAPMP) show a composition bias toward low complexity. A run of 2 helical transmembrane segments spans residues 119 to 139 (IIHTTLLVAAVVALLTSVCTL) and 162 to 182 (SLNPMLGVVNLGATFLMMVCA).

It belongs to the orbivirus NS3 family. As to quaternary structure, forms homooligomers via coiled-coil motif. Interacts with host OPTN; this interaction inhibits innate immune response.

The protein resides in the host cell membrane. The protein localises to the host Golgi apparatus. Its function is as follows. Plays a role in the inhibition of host innate immune response. Interacts with host OPTN and thus inhibits the recruitment of TBK1 to the host Golgi apparatus. In turn, downstream partner IRF3 cannot be activated and IFN-beta production is impaired. Facilitates viral particle release either by increasing plasma membrane permeability through a viroporin-like activity or by viral budding. In Antilocapra americana (Pronghorn), this protein is Non-structural protein P8 (Segment-10).